The following is a 669-amino-acid chain: Filensin (669 aa).

The head stretch occupies residues 1 to 33 (MYRRSYVFQARQERYERAQPAGPAAQPGGTAPG). Ser5 is modified (phosphoserine). In terms of domain architecture, IF rod spans 33–318 (GLAALQALGE…RIIEIEGSRL (286 aa)). Residues 34–68 (LAALQALGERVAVQVQRARALQQRHAGLRRQLDAF) form a coil 1A region. Ala35 is modified (N-acetylalanine). Positions 69-77 (QRLGEQPGP) are linker 1. The tract at residues 78-177 (EDALARHVEA…RYKKNLLEIQ (100 aa)) is coil 1B. The linker 12 stretch occupies residues 178–194 (TYITVLQQIVQTAPQVS). The segment at 195–318 (LVTGMRESGL…RIIEIEGSRL (124 aa)) is coil 2. The interval 319–669 (SSVFIETPIS…GEKSLPDTRA (351 aa)) is tail. At Ser339 the chain carries Phosphoserine. 3 disordered regions span residues 380–435 (VEET…GGQI), 449–468 (RVSG…FTKG), and 505–618 (HHDG…KALS). The span at 408–417 (SQPGAGGGHG) shows a compositional bias: gly residues. Residue Gly432 is the site of N-myristoyl glycine attachment. At Ser513 the chain carries Phosphoserine. Over residues 545–570 (NGLRAKEPKDLEEKDDDGKKEAEGSR) the composition is skewed to basic and acidic residues. A compositionally biased stretch (polar residues) spans 583–593 (PSTSHSQTSGS). Phosphothreonine is present on Thr585.

The protein belongs to the intermediate filament family. In terms of assembly, part of a complex required for lens intermediate filament formation composed of BFSP1, BFSP2 and CRYAA. Identified in a complex that contains VIM, EZR, AHNAK, BFSP1, BFSP2, ANK2, PLEC, PRX and spectrin. Found in a complex composed of PPL (via C-terminal linker domain), BFSP1 and BFSP2 in the retinal lens. Within the complex interacts with BFSP2. Interacts (via C-terminus) with MIP (via C-terminus) in aged lens fiber cells. Proteolytically cleaved during lens cell fiber differentiation with increased fragmentation as fiber cell age increases. In terms of processing, myristoylated at Gly-432 following proteolytic cleavage at Asp-431. Post-translationally, acetylated at Ala-35 following proteolytic cleavage at Leu-34. Detected in eye lens fiber cells (at protein level). Expressed in retinal lens epithelial cells (at protein level).

Its subcellular location is the cell membrane. It localises to the cytoplasm. The protein resides in the cytoskeleton. The protein localises to the cell cortex. Its function is as follows. Required for the correct formation of lens intermediate filaments as part of a complex composed of BFSP1, BFSP2 and CRYAA. Involved in altering the calcium regulation of MIP water permeability. This chain is Filensin (Bfsp1), found in Mus musculus (Mouse).